A 602-amino-acid chain; its full sequence is Aspartate--tRNA(Asp/Asn) ligase (602 aa).

E177 contacts L-aspartate. The aspartate stretch occupies residues 201-204 (QLFK). An L-aspartate-binding site is contributed by R223. ATP-binding positions include 223–225 (RDE) and Q232. H460 is an L-aspartate binding site. ATP is bound at residue E497. L-aspartate is bound at residue R504. 549-552 (GLDR) contributes to the ATP binding site.

The protein belongs to the class-II aminoacyl-tRNA synthetase family. Type 1 subfamily. In terms of assembly, homodimer.

The protein resides in the cytoplasm. It carries out the reaction tRNA(Asx) + L-aspartate + ATP = L-aspartyl-tRNA(Asx) + AMP + diphosphate. Its function is as follows. Aspartyl-tRNA synthetase with relaxed tRNA specificity since it is able to aspartylate not only its cognate tRNA(Asp) but also tRNA(Asn). Reaction proceeds in two steps: L-aspartate is first activated by ATP to form Asp-AMP and then transferred to the acceptor end of tRNA(Asp/Asn). The polypeptide is Aspartate--tRNA(Asp/Asn) ligase (Prochlorococcus marinus (strain MIT 9515)).